The following is an 87-amino-acid chain: Small ribosomal subunit protein bS20 (87 aa).

The segment covering 1-11 (MANIKSAKKRA) has biased composition (basic residues). The disordered stretch occupies residues 1–27 (MANIKSAKKRAVQSEKRRQHNASQRSM).

It belongs to the bacterial ribosomal protein bS20 family.

Its function is as follows. Binds directly to 16S ribosomal RNA. The protein is Small ribosomal subunit protein bS20 of Histophilus somni (strain 129Pt) (Haemophilus somnus).